The chain runs to 186 residues: Ribosome-recycling factor (186 aa).

Belongs to the RRF family.

The protein resides in the cytoplasm. Responsible for the release of ribosomes from messenger RNA at the termination of protein biosynthesis. May increase the efficiency of translation by recycling ribosomes from one round of translation to another. This chain is Ribosome-recycling factor, found in Wolinella succinogenes (strain ATCC 29543 / DSM 1740 / CCUG 13145 / JCM 31913 / LMG 7466 / NCTC 11488 / FDC 602W) (Vibrio succinogenes).